A 1892-amino-acid polypeptide reads, in one-letter code: Protein TIC 214 (1892 aa).

6 helical membrane-spanning segments follow: residues 18-38 (IINS…FSIG), 64-84 (FITG…HLAL), 87-107 (PHTI…WNNH), 124-144 (LSIQ…HFIL), 172-192 (VGWL…LVWI), and 221-241 (IFSI…PSPI). Disordered stretches follow at residues 250–300 (SKTE…EGWD), 794–814 (REEQ…ENKR), and 1581–1609 (RIQE…LGPV). Acidic residues predominate over residues 256–268 (VESEEEKDVEIET). Residues 1581–1602 (RIQEEKEPASQGEKERGSDIEN) are compositionally biased toward basic and acidic residues.

This sequence belongs to the TIC214 family. Part of the Tic complex.

The protein resides in the plastid. The protein localises to the chloroplast inner membrane. Functionally, involved in protein precursor import into chloroplasts. May be part of an intermediate translocation complex acting as a protein-conducting channel at the inner envelope. The chain is Protein TIC 214 from Nicotiana tomentosiformis (Tobacco).